A 562-amino-acid chain; its full sequence is Adenylate kinase isoenzyme 5 (562 aa).

2 adenylate kinase regions span residues 133–316 (KIIL…VAVD) and 377–559 (KIIF…TAID). Residue 142–147 (GSGKGT) participates in ATP binding. Residues 162–193 (SVGELLRKKIHSASSNRKWSLIAKIITNGELA) form an NMP 1 region. Residues R168, 191–193 (ELA), 219–222 (GFPR), and Q226 each bind AMP. The LID 1 stretch occupies residues 256–266 (KRAEQQGRPDD). R257 contributes to the ATP binding site. The AMP site is built by R263 and R274. Position 386-391 (386-391 (GSGKGT)) interacts with ATP. Positions 406–435 (STGELLRQELTSESERSKLIRDIMERGDLV) are NMP 2. AMP contacts are provided by residues T407, R412, 433–435 (DLV), 462–465 (GYPR), and Q469. Residues 499–509 (QRSQSSQRGED) are LID 2. Residue R500 participates in ATP binding. AMP contacts are provided by R506 and R517. An ATP-binding site is contributed by G545.

The protein belongs to the adenylate kinase family. As to quaternary structure, monomer. Interacts with YWHAZ. Brain specific.

It localises to the cytoplasm. It catalyses the reaction AMP + ATP = 2 ADP. It carries out the reaction a 2'-deoxyribonucleoside 5'-diphosphate + ATP = a 2'-deoxyribonucleoside 5'-triphosphate + ADP. The catalysed reaction is a ribonucleoside 5'-diphosphate + ATP = a ribonucleoside 5'-triphosphate + ADP. In terms of biological role, nucleoside monophosphate (NMP) kinase that catalyzes the reversible transfer of the terminal phosphate group between nucleoside triphosphates and monophosphates. Active on AMP and dAMP with ATP as a donor. When GTP is used as phosphate donor, the enzyme phosphorylates AMP, CMP, and to a small extent dCMP. Also displays broad nucleoside diphosphate kinase activity. This is Adenylate kinase isoenzyme 5 (Ak5) from Mus musculus (Mouse).